The sequence spans 238 residues: Uroporphyrinogen-III C-methyltransferase (238 aa).

S-adenosyl-L-homocysteine contacts are provided by residues P11, 87-89 (GGD), 117-118 (TS), and M170.

Belongs to the precorrin methyltransferase family. As to quaternary structure, monomer.

The catalysed reaction is uroporphyrinogen III + 2 S-adenosyl-L-methionine = precorrin-2 + 2 S-adenosyl-L-homocysteine + H(+). It functions in the pathway cofactor biosynthesis; adenosylcobalamin biosynthesis; precorrin-2 from uroporphyrinogen III: step 1/1. The protein operates within porphyrin-containing compound metabolism; siroheme biosynthesis; precorrin-2 from uroporphyrinogen III: step 1/1. SUMT exhibits a substrate inhibition phenomenon at uroporphyrinogen III concentrations above 0.5 uM; this property might play a regulatory role in cobalamin biosynthesis. In terms of biological role, catalyzes the two successive C-2 and C-7 methylation reactions involved in the conversion of uroporphyrinogen III to precorrin-2 via the intermediate formation of precorrin-1. It is a step in the biosynthesis of both cobalamin (vitamin B12) and siroheme. This Priestia megaterium (Bacillus megaterium) protein is Uroporphyrinogen-III C-methyltransferase.